Here is a 423-residue protein sequence, read N- to C-terminus: Probable multifunctional protein ADE2 (423 aa).

Positions 1-263 (MSSLAEIASR…KVMDITATFS (263 aa)) are SAICAR synthetase. An AIR carboxylase region spans residues 264–423 (KHQQKCHVLV…NIYNANRKLE (160 aa)).

The protein in the N-terminal section; belongs to the SAICAR synthetase family. This sequence in the C-terminal section; belongs to the AIR carboxylase family. Class II subfamily.

It catalyses the reaction 5-amino-1-(5-phospho-D-ribosyl)imidazole-4-carboxylate + L-aspartate + ATP = (2S)-2-[5-amino-1-(5-phospho-beta-D-ribosyl)imidazole-4-carboxamido]succinate + ADP + phosphate + 2 H(+). It carries out the reaction 5-amino-1-(5-phospho-D-ribosyl)imidazole-4-carboxylate + H(+) = 5-amino-1-(5-phospho-beta-D-ribosyl)imidazole + CO2. Its pathway is purine metabolism; IMP biosynthesis via de novo pathway; 5-amino-1-(5-phospho-D-ribosyl)imidazole-4-carboxamide from 5-amino-1-(5-phospho-D-ribosyl)imidazole-4-carboxylate: step 1/2. It functions in the pathway purine metabolism; IMP biosynthesis via de novo pathway; 5-amino-1-(5-phospho-D-ribosyl)imidazole-4-carboxylate from 5-amino-1-(5-phospho-D-ribosyl)imidazole (carboxylase route): step 1/1. This is Probable multifunctional protein ADE2 from Caenorhabditis elegans.